We begin with the raw amino-acid sequence, 2144 residues long: HEAT repeat-containing protein 1 (2144 aa).

Met-1 is subject to N-acetylmethionine. Thr-2 bears the N-acetylthreonine; in HEAT repeat-containing protein 1, N-terminally processed mark. A Phosphoserine modification is found at Ser-516. The HEAT 1 repeat unit spans residues 913–951 (ASISSPVVTSLLINLGSPVKEVRRAAIQCLQALSGVASP). The segment at 1170-1191 (KAKPLGTVQQKRRQKMQQKKSQ) is disordered. Position 1190 is a phosphoserine (Ser-1190). The HEAT 2 repeat unit spans residues 1347-1385 (NKTVKMVIPALIQSDSGDSIEVSRNVEEIVVKIISVFVD). Ser-1492 is modified (phosphoserine). 3 HEAT repeats span residues 1594–1632 (LLPT…QNIS), 1730–1770 (IPQL…VVET), and 2100–2138 (IVLL…VLGE).

Belongs to the HEATR1/UTP10 family. As to quaternary structure, part of the small subunit (SSU) processome, composed of more than 70 proteins and the RNA chaperone small nucleolar RNA (snoRNA) U3. Interacts with MYC; the interaction is required for localization of MYC to the nucleolus.

Its subcellular location is the nucleus. It is found in the nucleolus. In terms of biological role, ribosome biogenesis factor; required for recruitment of Myc to nucleoli. Involved in nucleolar processing of pre-18S ribosomal RNA. Required for optimal pre-ribosomal RNA transcription by RNA polymerase I. Part of the small subunit (SSU) processome, first precursor of the small eukaryotic ribosomal subunit. During the assembly of the SSU processome in the nucleolus, many ribosome biogenesis factors, an RNA chaperone and ribosomal proteins associate with the nascent pre-rRNA and work in concert to generate RNA folding, modifications, rearrangements and cleavage as well as targeted degradation of pre-ribosomal RNA by the RNA exosome. Involved in neuronal-lineage cell proliferation. This Homo sapiens (Human) protein is HEAT repeat-containing protein 1.